Here is a 376-residue protein sequence, read N- to C-terminus: MTETFQFKLLAADGNARRGEVVTPRGTIRTPAFMPVGTVGTVKAMYLDQVRDLGADIILGNTYHLMLRPGAERVARLGGLHKFIRWERPILTDSGGFQVMSLSSLRKLNEQGVTFKSHVDGALYHMSPERSIEIQGLLGSDIQMQLDECVALPAEPDEIERAMEMSLRWAERCKVAFGDQPGKAMFGIVQGGDIPRLRERSALALRDLDLKGYAVGGLAVGEPQEVMLGMLDVTCPVLPADKPRYLMGVGTPDDILKSVAHGIDMFDCVMPTRSGRHGLAFTRYGRINLRNARHAEDTRPLDEQSSCPATRDYSRAYLHHLIRSNESLGGMLLSWNNLAYYQELMAGIRKAIEEGRYTDFMAETMEGWQRGDLPPV.

Asp-93 functions as the Proton acceptor in the catalytic mechanism. Residues 93-97 (DSGGF), Asp-147, Gln-190, and Gly-217 each bind substrate. The segment at 248-254 (GVGTPDD) is RNA binding. Asp-267 functions as the Nucleophile in the catalytic mechanism. The interval 272–276 (TRSGR) is RNA binding; important for wobble base 34 recognition.

It belongs to the queuine tRNA-ribosyltransferase family. Homodimer. Within each dimer, one monomer is responsible for RNA recognition and catalysis, while the other monomer binds to the replacement base PreQ1.

It carries out the reaction 7-aminomethyl-7-carbaguanine + guanosine(34) in tRNA = 7-aminomethyl-7-carbaguanosine(34) in tRNA + guanine. It participates in tRNA modification; tRNA-queuosine biosynthesis. Catalyzes the base-exchange of a guanine (G) residue with the queuine precursor 7-aminomethyl-7-deazaguanine (PreQ1) at position 34 (anticodon wobble position) in tRNAs with GU(N) anticodons (tRNA-Asp, -Asn, -His and -Tyr). Catalysis occurs through a double-displacement mechanism. The nucleophile active site attacks the C1' of nucleotide 34 to detach the guanine base from the RNA, forming a covalent enzyme-RNA intermediate. The proton acceptor active site deprotonates the incoming PreQ1, allowing a nucleophilic attack on the C1' of the ribose to form the product. After dissociation, two additional enzymatic reactions on the tRNA convert PreQ1 to queuine (Q), resulting in the hypermodified nucleoside queuosine (7-(((4,5-cis-dihydroxy-2-cyclopenten-1-yl)amino)methyl)-7-deazaguanosine). In Rhizobium meliloti (strain 1021) (Ensifer meliloti), this protein is Queuine tRNA-ribosyltransferase.